The primary structure comprises 145 residues: D-aminoacyl-tRNA deacylase (145 aa).

The short motif at 137 to 138 (GP) is the Gly-cisPro motif, important for rejection of L-amino acids element.

It belongs to the DTD family. In terms of assembly, homodimer.

The protein resides in the cytoplasm. The catalysed reaction is glycyl-tRNA(Ala) + H2O = tRNA(Ala) + glycine + H(+). It catalyses the reaction a D-aminoacyl-tRNA + H2O = a tRNA + a D-alpha-amino acid + H(+). In terms of biological role, an aminoacyl-tRNA editing enzyme that deacylates mischarged D-aminoacyl-tRNAs. Also deacylates mischarged glycyl-tRNA(Ala), protecting cells against glycine mischarging by AlaRS. Acts via tRNA-based rather than protein-based catalysis; rejects L-amino acids rather than detecting D-amino acids in the active site. By recycling D-aminoacyl-tRNA to D-amino acids and free tRNA molecules, this enzyme counteracts the toxicity associated with the formation of D-aminoacyl-tRNA entities in vivo and helps enforce protein L-homochirality. The polypeptide is D-aminoacyl-tRNA deacylase (Shewanella sp. (strain MR-4)).